The following is a 303-amino-acid chain: Putative S-adenosyl-L-methionine-dependent methyltransferase MAP_4197c (303 aa).

S-adenosyl-L-methionine contacts are provided by residues Asp129 and 158–159; that span reads DL.

It belongs to the UPF0677 family.

Its function is as follows. Exhibits S-adenosyl-L-methionine-dependent methyltransferase activity. This Mycolicibacterium paratuberculosis (strain ATCC BAA-968 / K-10) (Mycobacterium paratuberculosis) protein is Putative S-adenosyl-L-methionine-dependent methyltransferase MAP_4197c.